An 883-amino-acid polypeptide reads, in one-letter code: MTESASSTSGQEFDVFSVMDWKDGVGTLPGSDLKFRVNEFGALEVITDESEMESVKKATATTTWMVPTAQDAPTSPPSSRPVFPPAYWTSPPGCPTVFSEKTGVPFRLKEQSKADGLQFCENCCQYGNGDECLSGGKYCSQNCARHAKDKDQKDERDGGEDNDEEDPKCSRKKKPKLSLKADSKDDGEERDDEMENKQDGRILRGSQRARRKRRGDSAVLKQGLPPKGKKTWCWASYLEEEKAVAVPTKLFKEHQSFPYNKNGFKVGMKLEGVDPDHQAMYCVLTVAEVCGYRIKLHFDGYSDCYDFWVNADALDIHPVGWCEKTGHKLRPPKGYKEEEFNWQSYLKTCKAQAAPKSLFENQNITVIPSGFRVGMKLEAADKKSPSVICVATVTDMVDNRFLVHFDNWDESYDYWCESNSPHIHPVGWCKEHRRTLITPPGYSHVKHFSWDKYLEETNSLPAPARAFKVKPPHGFQKKMKLEAVDKRNPLFIRVATVADTDDHRIKVHFDGWSSCYDYWIDADSPDIHPVGWCSKTGHPLQAPLSPAELMEPSETGGCPTLGCRGVGHFKKSRYLGTQSGANCPYSEINLSKERIFPDRLSGDTSPPTTPSFPRSKRMDTRESSSSPETREKHANNFKEDSEKKKENEVKTSAEAKVVREEPTPSVQQSQPPQQVQQVQHAQPPQQAQKAPQAQQAQQAQQAQQAPQAPQTPQPQQAPQVQQAQQAPQAQQAQQPQQAQQPQQAPPVQQPQQVQQAQPTQQQAQTQQQAQRRSAVFLSFKPPIPCLPLRWEQQSKLLPTVAGIPASRVSKWSTDEVSEFIQSLPGCEEHGKVFKDEQIDGEAFLLMTQTDIVKIMSIKLGPALKIFNSILMFKAAEKNSHNEL.

An interaction with RBPJ. Required for transcription repressor activity on Notch target genes region spans residues 1-64 (MTESASSTSG…VKKATATTTW (64 aa)). Positions 146–156 (HAKDKDQKDER) are enriched in basic and acidic residues. Residues 146 to 223 (HAKDKDQKDE…RGDSAVLKQG (78 aa)) form a disordered region. Composition is skewed to acidic residues over residues 157-166 (DGGEDNDEED) and 185-194 (DDGEERDDEM). MBT repeat units follow at residues 232-332 (WCWA…LRPP), 340-439 (FNWQ…LITP), and 448-543 (FSWD…LQAP). The segment at 549 to 593 (LMEPSETGGCPTLGCRGVGHFKKSRYLGTQSGANCPYSEINLSKE) adopts a CCHHC-type; degenerate zinc-finger fold. A disordered region spans residues 595-768 (IFPDRLSGDT…TQQQAQTQQQ (174 aa)). Residues 616–662 (KRMDTRESSSSPETREKHANNFKEDSEKKKENEVKTSAEAKVVREEP) are compositionally biased toward basic and acidic residues. Lys638 is covalently cross-linked (Glycyl lysine isopeptide (Lys-Gly) (interchain with G-Cter in SUMO2)). 2 stretches are compositionally biased toward low complexity: residues 663–742 (TPSV…QQPQ) and 749–768 (QPQQ…TQQQ). The SAM domain maps to 811 to 875 (WSTDEVSEFI…FNSILMFKAA (65 aa)).

In terms of assembly, interacts with RNF2. Interacts (via SAM domain) with SAMD1 (via SAM domain); the interaction mediates L3MBTL3 binding to chromatin. Interacts with RBPJ; the interaction is required for L3MBTL3 localization to chromatin and is impaired the Notch-derived peptides containing the intracellular domain (NICD). Interacts (via SAM domain) with KDM1A. Interacts with DCAF5. Interacts with DNMT1. Interacts with E2F1. Interacts with SOX2. Interacts with SFMBT1. As to expression, detected in hematopoietic progenitor cells in fetal liver. Detected in adult bone marrow, heart, brain, spleen, lung, liver, kidney and testis.

Its subcellular location is the nucleus. Functionally, is a negative regulator of Notch target genes expression, required for RBPJ-mediated transcriptional repression. It recruits KDM1A to Notch-responsive elements and promotes KDM1A-mediated H3K4me demethylation. Involved in the regulation of ubiquitin-dependent degradation of a set of methylated non-histone proteins, including SOX2. It acts as an adapter recruiting the CRL4-DCAF5 E3 ubiquitin ligase complex to methylated target proteins. Also involved in the regulation of ubiquitin-dependent degradation of methylated DNMT1 and E2F1. Required for normal maturation of myeloid progenitor cells. The protein is Lethal(3)malignant brain tumor-like protein 3 of Mus musculus (Mouse).